Consider the following 179-residue polypeptide: Ribosome maturation factor RimM (179 aa).

In terms of domain architecture, PRC barrel spans 100 to 176 (KEEFHLLELI…FLIINPPNGL (77 aa)).

This sequence belongs to the RimM family. As to quaternary structure, binds ribosomal protein uS19.

The protein localises to the cytoplasm. An accessory protein needed during the final step in the assembly of 30S ribosomal subunit, possibly for assembly of the head region. Essential for efficient processing of 16S rRNA. May be needed both before and after RbfA during the maturation of 16S rRNA. It has affinity for free ribosomal 30S subunits but not for 70S ribosomes. This is Ribosome maturation factor RimM from Prochlorococcus marinus (strain AS9601).